The sequence spans 524 residues: Glutamyl-tRNA(Gln) amidotransferase subunit A (524 aa).

Residues Lys-109 and Ser-184 each act as charge relay system in the active site. Ser-208 (acyl-ester intermediate) is an active-site residue.

The protein belongs to the amidase family. GatA subfamily. As to quaternary structure, heterotrimer of A, B and C subunits.

The enzyme catalyses L-glutamyl-tRNA(Gln) + L-glutamine + ATP + H2O = L-glutaminyl-tRNA(Gln) + L-glutamate + ADP + phosphate + H(+). Allows the formation of correctly charged Gln-tRNA(Gln) through the transamidation of misacylated Glu-tRNA(Gln) in organisms which lack glutaminyl-tRNA synthetase. The reaction takes place in the presence of glutamine and ATP through an activated gamma-phospho-Glu-tRNA(Gln). This is Glutamyl-tRNA(Gln) amidotransferase subunit A from Tropheryma whipplei (strain TW08/27) (Whipple's bacillus).